Here is a 232-residue protein sequence, read N- to C-terminus: Lipoprotein-releasing system ATP-binding protein LolD (232 aa).

The ABC transporter domain maps to 11–231 (VYLHDIKRQY…SIEDGVIVEL (221 aa)). 47 to 54 (APSGSGKS) is an ATP binding site.

This sequence belongs to the ABC transporter superfamily. Lipoprotein translocase (TC 3.A.1.125) family. The complex is composed of two ATP-binding proteins (LolD) and two transmembrane proteins (LolC and LolE).

It localises to the cell inner membrane. In terms of biological role, part of the ABC transporter complex LolCDE involved in the translocation of mature outer membrane-directed lipoproteins, from the inner membrane to the periplasmic chaperone, LolA. Responsible for the formation of the LolA-lipoprotein complex in an ATP-dependent manner. This Rhodopseudomonas palustris (strain BisB5) protein is Lipoprotein-releasing system ATP-binding protein LolD.